The chain runs to 338 residues: Ketol-acid reductoisomerase (NADP(+)) (338 aa).

One can recognise a KARI N-terminal Rossmann domain in the interval 3-183 (IDVFYDDDAD…GGARAGVIPT (181 aa)). NADP(+) is bound by residues 26 to 29 (YGSQ), Arg-49, Ser-52, Ser-54, and 84 to 87 (DTSQ). The active site involves His-109. Gly-135 is a binding site for NADP(+). Residues 184–329 (TFEAETVTDL…AKLRDLMSWV (146 aa)) form the KARI C-terminal knotted domain. Mg(2+) contacts are provided by Asp-192, Glu-196, Glu-228, and Glu-232. Ser-253 contributes to the substrate binding site.

It belongs to the ketol-acid reductoisomerase family. The cofactor is Mg(2+).

The catalysed reaction is (2R)-2,3-dihydroxy-3-methylbutanoate + NADP(+) = (2S)-2-acetolactate + NADPH + H(+). It catalyses the reaction (2R,3R)-2,3-dihydroxy-3-methylpentanoate + NADP(+) = (S)-2-ethyl-2-hydroxy-3-oxobutanoate + NADPH + H(+). It functions in the pathway amino-acid biosynthesis; L-isoleucine biosynthesis; L-isoleucine from 2-oxobutanoate: step 2/4. Its pathway is amino-acid biosynthesis; L-valine biosynthesis; L-valine from pyruvate: step 2/4. Functionally, involved in the biosynthesis of branched-chain amino acids (BCAA). Catalyzes an alkyl-migration followed by a ketol-acid reduction of (S)-2-acetolactate (S2AL) to yield (R)-2,3-dihydroxy-isovalerate. In the isomerase reaction, S2AL is rearranged via a Mg-dependent methyl migration to produce 3-hydroxy-3-methyl-2-ketobutyrate (HMKB). In the reductase reaction, this 2-ketoacid undergoes a metal-dependent reduction by NADPH to yield (R)-2,3-dihydroxy-isovalerate. The polypeptide is Ketol-acid reductoisomerase (NADP(+)) (Corynebacterium jeikeium (strain K411)).